Reading from the N-terminus, the 409-residue chain is MAFGKSLFHAIGRVSLVRQIAAGLALGIVIGSVSPQLGLAAGLFGSLFVGALKAVAPVLVFILVAATIAQHQKGNKAHIRPIIVLYLIGTFSAALTAVIAGMVFPTHIVLAGAGDVSAAPPSGIVEVLKSLLMNLVANPINAIANANYIGILAWALVLGAALRNHGSDVTRQVVADLAEAVSTVVKWIIRFAPLGIFGLVSSTIAETGFGALAGYAKLLAVLLGCMAFIALAVNPAIVWWKIRRNPFPLVFTCLRESGVYAFFTRSSAANIPVNMALAKKLGLHEDTYSISIPLGATINMAGAAITITVLAMAAAHTQGITVDFATALLLSLVATVSACGASGVAGGSLLLIPLACSLFGIDNDVAMQVVAVGFIIGVIQDSAETALNSSTDVLFTAAADLGRQRNRAE.

8 helical membrane passes run 24–44, 48–68, 82–102, 142–162, 194–214, 218–238, 292–312, and 319–339; these read LALGIVIGSVSPQLGLAAGLF, FVGALKAVAPVLVFILVAATI, IIVLYLIGTFSAALTAVIAGM, AIANANYIGILAWALVLGAAL, LGIFGLVSSTIAETGFGALAG, LLAVLLGCMAFIALAVNPAIV, IPLGATINMAGAAITITVLAM, and GITVDFATALLLSLVATVSAC.

It belongs to the dicarboxylate/amino acid:cation symporter (DAACS) (TC 2.A.23) family.

The protein resides in the cell inner membrane. It carries out the reaction L-serine(in) + Na(+)(in) = L-serine(out) + Na(+)(out). The catalysed reaction is L-threonine(in) + Na(+)(in) = L-threonine(out) + Na(+)(out). Functionally, involved in the import of serine and threonine into the cell, with the concomitant import of sodium (symport system). This is Serine/threonine transporter SstT from Neisseria meningitidis serogroup B (strain ATCC BAA-335 / MC58).